Reading from the N-terminus, the 858-residue chain is Elongation factor 2 (858 aa).

Residues 17–362 enclose the tr-type G domain; it reads ANIRNMSVIA…MITIHLPSPV (346 aa). Residue 26-33 coordinates GTP; sequence AHVDHGKS. Thr-54 is subject to Phosphothreonine. Thr-57 carries the phosphothreonine; by EEF2K modification. The residue at position 59 (Thr-59) is a Phosphothreonine. Residue Lys-152 is modified to N6-succinyllysine. GTP-binding positions include 158 to 161 and 216 to 218; these read NKMD and SGL. Lys-235 carries the N6-acetyllysine modification. Lys-239 is modified (N6-acetyllysine; alternate). Lys-239 is covalently cross-linked (Glycyl lysine isopeptide (Lys-Gly) (interchain with G-Cter in SUMO1); alternate). Tyr-265 is subject to Phosphotyrosine; by CSK. Lys-272 bears the N6-acetyllysine; alternate mark. Lys-272 bears the N6-succinyllysine; alternate mark. N6-acetyllysine is present on Lys-275. Lys-322 is covalently cross-linked (Glycyl lysine isopeptide (Lys-Gly) (interchain with G-Cter in SUMO)). Ser-325 carries the phosphoserine modification. Tyr-373 is modified (phosphotyrosine; by CSK). Thr-435 carries the phosphothreonine modification. 2 positions are modified to N6-acetyllysine: Lys-439 and Lys-445. Position 502 is a phosphoserine (Ser-502). Residue Lys-525 is modified to N6,N6,N6-trimethyllysine; by EEF2KMT. A Glycyl lysine isopeptide (Lys-Gly) (interchain with G-Cter in SUMO) cross-link involves residue Lys-529. Lys-572 carries the N6-succinyllysine modification. At Ser-595 the chain carries Phosphoserine; by CDK2. N6-acetyllysine is present on Lys-619. His-715 is subject to Diphthamide.

The protein belongs to the TRAFAC class translation factor GTPase superfamily. Classic translation factor GTPase family. EF-G/EF-2 subfamily. In terms of assembly, binds to 80S ribosomes. Actively translating ribosomes show mutually exclusive binding of eIF5a (EIF5A or EIF5A2) and EEF2/eEF2. Interacts with SERBP1; interaction sequesters EEF2/eEF2 at the A-site of the ribosome, thereby blocking the interaction sites of the mRNA-tRNA complex, promoting ribosome stabilization and hibernation. Interacts with HABP4; interaction takes place at the A-site of hibernating ribosomes and promotes ribosome stabilization. Component of the mRNA surveillance SURF complex, at least composed of ERF1, ERF3 (ERF3A or ERF3B), EEF2, UPF1/RENT1, SMG1, SMG8 and SMG9. Interacts with RBPMS2. Post-translationally, phosphorylation by EF-2 kinase completely inactivates EF-2; it requires prior phosphorylation by CDK2 at Ser-595 during mitotic prometaphase. Phosphorylation by CSK promotes SUMOylation, proteolytic cleavage, and nuclear translocation if the C-terminal fragment. In terms of processing, diphthamide is 2-[3-carboxyamido-3-(trimethyl-ammonio)propyl]histidine. ISGylated. Post-translationally, proteolytically processed at two sites following phosphorylation by CSK. In terms of processing, SUMOylated following phosphorylation by CSK, promotes proteolytic cleavage.

The protein localises to the cytoplasm. It localises to the nucleus. The enzyme catalyses GTP + H2O = GDP + phosphate + H(+). Catalyzes the GTP-dependent ribosomal translocation step during translation elongation. During this step, the ribosome changes from the pre-translocational (PRE) to the post-translocational (POST) state as the newly formed A-site-bound peptidyl-tRNA and P-site-bound deacylated tRNA move to the P and E sites, respectively. Catalyzes the coordinated movement of the two tRNA molecules, the mRNA and conformational changes in the ribosome. The polypeptide is Elongation factor 2 (Eef2) (Mus musculus (Mouse)).